The sequence spans 224 residues: Transmembrane emp24 domain-containing protein 7 (224 aa).

A signal peptide spans Met-1–Ala-34. Topologically, residues Ser-35–Ala-187 are lumenal. Residues Lys-46–Val-128 enclose the GOLD domain. An N-linked (GlcNAc...) asparagine glycan is attached at Asn-103. Residues Tyr-188–Leu-208 traverse the membrane as a helical segment. Over Lys-209–Ser-224 the chain is Cytoplasmic. The COPII vesicle coat-binding motif lies at Phe-211–Phe-212. Residues Phe-211–Ser-224 carry the COPI vesicle coat-binding motif.

The protein belongs to the EMP24/GP25L family. As to quaternary structure, predominantly monomeric and to lesser extent homodimeric in endoplasmic reticulum, endoplasmic reticulum-Golgi intermediate compartment and cis-Golgi network. Oligomerizes with other members of the EMP24/GP25L family such as TMED2, TMED9 and TMED10. Interacts (via C-terminus) with COPG1; the interaction involves dimeric TMED7. In terms of processing, N-linked glycosylated in complex form containing terminal sialic acid.

The protein localises to the endoplasmic reticulum membrane. The protein resides in the golgi apparatus. Its subcellular location is the cis-Golgi network membrane. It localises to the endoplasmic reticulum-Golgi intermediate compartment membrane. It is found in the cytoplasmic vesicle. The protein localises to the COPI-coated vesicle membrane. The protein resides in the COPII-coated vesicle membrane. In terms of biological role, potential role in vesicular protein trafficking, mainly in the early secretory pathway. Appears to play a role in the biosynthesis of secreted cargo including processing and post-translational modifications. This chain is Transmembrane emp24 domain-containing protein 7 (TMED7), found in Homo sapiens (Human).